The primary structure comprises 353 residues: uncharacterized protein (353 aa).

The signal sequence occupies residues 1 to 30 (MHLRHLFSSRLRGSLLLGSLLVVSSFSTQA).

As to quaternary structure, monomer.

This is an uncharacterized protein from Escherichia coli (strain K12).